The primary structure comprises 349 residues: Anthranilate phosphoribosyltransferase (349 aa).

Residues G82, 85–86 (GD), 92–95 (NVST), 110–118 (KHGNRGVSS), and S122 each bind 5-phospho-alpha-D-ribose 1-diphosphate. G82 serves as a coordination point for anthranilate. S94 is a binding site for Mg(2+). Residue N113 coordinates anthranilate. R168 contributes to the anthranilate binding site. Mg(2+)-binding residues include D227 and E228.

It belongs to the anthranilate phosphoribosyltransferase family. As to quaternary structure, homodimer. Mg(2+) serves as cofactor.

The enzyme catalyses N-(5-phospho-beta-D-ribosyl)anthranilate + diphosphate = 5-phospho-alpha-D-ribose 1-diphosphate + anthranilate. Its pathway is amino-acid biosynthesis; L-tryptophan biosynthesis; L-tryptophan from chorismate: step 2/5. Catalyzes the transfer of the phosphoribosyl group of 5-phosphorylribose-1-pyrophosphate (PRPP) to anthranilate to yield N-(5'-phosphoribosyl)-anthranilate (PRA). This chain is Anthranilate phosphoribosyltransferase, found in Acinetobacter baylyi (strain ATCC 33305 / BD413 / ADP1).